The chain runs to 437 residues: MEQLAKLLLWQLLLQQSSVVYLYSVPADASNPDSVVVSVLNISATRGSQAVLPCKSYRMVWTQDRLNDRQRVVHWDVYSTYYGDNKMERLCDMYSAGNQRVYSSYNQGRILMPQNAFTDGNFSLVIKDVAESDAGVYSCNLHHHYCHLYETVKIQLDITKKAKAAKEYWDGEKAVIVALEGSTVMLPCVNRNHIWTERHSEEEQQVVHWDRQPPGVPHDRADRLIDLYASGERRSYGPLFIRQKMNITDTAFALGDFSLRISELENADEGTYSCHLHHHYCGLHERRIYQVFVTEPVREKKVVNLTTHNTAPAIDPNVVRGHNVINVIIPESRIHFFQQLGYVLATLLLFVVLLIIVVFITRKRRQRGYEYNVKKYGEKDVNLKEFTVDTTDLTQYKSEDIRLDYKNNILKEKAEQARSFPAKNIDLDKDFRKEYCK.

Positions methionine 1–leucine 22 are cleaved as a signal peptide. Residues tyrosine 23–glutamine 339 are Extracellular-facing. Ig-like V-type domains follow at residues proline 32–threonine 159 and glutamate 167–threonine 294. Residues asparagine 41, asparagine 121, asparagine 246, and asparagine 304 are each glycosylated (N-linked (GlcNAc...) asparagine). Intrachain disulfides connect cysteine 54–cysteine 139 and cysteine 188–cysteine 274. The helical transmembrane segment at leucine 340–isoleucine 360 threads the bilayer. At threonine 361–lysine 437 the chain is on the cytoplasmic side.

As to quaternary structure, homodimer in cis. Does not appear to form trans-homodimers.

It localises to the cell membrane. Its function is as follows. Transmembrane protein which can modulate activity of various signaling pathways, probably via binding to integrin ITGAV:ITGB3. Mediates heterophilic cell-cell interactions in vitro. This is Matrix remodeling-associated protein 8 (MXRA8) from Gallus gallus (Chicken).